Reading from the N-terminus, the 208-residue chain is FMN-dependent NADH:quinone oxidoreductase (208 aa).

FMN contacts are provided by residues Ser9 and 15–17 (SHS).

It belongs to the azoreductase type 1 family. In terms of assembly, homodimer. FMN is required as a cofactor.

The catalysed reaction is 2 a quinone + NADH + H(+) = 2 a 1,4-benzosemiquinone + NAD(+). The enzyme catalyses N,N-dimethyl-1,4-phenylenediamine + anthranilate + 2 NAD(+) = 2-(4-dimethylaminophenyl)diazenylbenzoate + 2 NADH + 2 H(+). Functionally, quinone reductase that provides resistance to thiol-specific stress caused by electrophilic quinones. In terms of biological role, also exhibits azoreductase activity. Catalyzes the reductive cleavage of the azo bond in aromatic azo compounds to the corresponding amines. The chain is FMN-dependent NADH:quinone oxidoreductase from Bordetella petrii (strain ATCC BAA-461 / DSM 12804 / CCUG 43448).